We begin with the raw amino-acid sequence, 160 residues long: Large ribosomal subunit protein uL15 (160 aa).

Positions 1–13 (MKLNELRDNEGAA) are enriched in basic and acidic residues. The interval 1–51 (MKLNELRDNEGAARKKKRVARGPGSGKGKTAGRGIKGQKSRSGVALNGYEG) is disordered. Residues 23 to 35 (PGSGKGKTAGRGI) are compositionally biased toward gly residues.

This sequence belongs to the universal ribosomal protein uL15 family. Part of the 50S ribosomal subunit.

Binds to the 23S rRNA. This chain is Large ribosomal subunit protein uL15, found in Cereibacter sphaeroides (strain ATCC 17025 / ATH 2.4.3) (Rhodobacter sphaeroides).